Consider the following 300-residue polypeptide: MILLEVNNRIIEETLALKFENAAAGNKPEAVEVTFADFDGVLYHISNPNGDKTKVMVSISLKFYKELQAHGADELLKRVYGSFLVNPESGYNVSLLYDLENLPASKDSIVHQAGMLKRNCFASVFEKYFQFQEEGKEGENRAVIHYRDDETMYVESKKDRVTVVFSTVFKDDDDVVIGKVFMQEFKEGRRASHTAPQVLFSHREPPLELKDTDAAVGDNIGYITFVLFPRHTNASARDNTINLIHTFRDYLHYHIKCSKAYIHTRMRAKTSDFLKVLNRARPDAEKKEMKTITGKTFSSR.

N6-acetyllysine is present on residues Lys-275 and Lys-295.

The protein belongs to the ARPC2 family. In terms of assembly, component of the Arp2/3 complex composed of ACTR2/ARP2, ACTR3/ARP3, ARPC1B/p41-ARC, ARPC2/p34-ARC, ARPC3/p21-ARC, ARPC4/p20-ARC and ARPC5/p16-ARC. Interacts with SHANK3; the interaction probably mediates the association of SHANK3 with the Arp2/3 complex. Interacts with DNAI3; this interaction reduces binding of the Arp2/3 complex to the VCA domain of nucleation promoting factors.

Its subcellular location is the cytoplasm. The protein localises to the cytoskeleton. It is found in the cell projection. It localises to the synapse. The protein resides in the synaptosome. Its subcellular location is the nucleus. Actin-binding component of the Arp2/3 complex, a multiprotein complex that mediates actin polymerization upon stimulation by nucleation-promoting factor (NPF). The Arp2/3 complex mediates the formation of branched actin networks in the cytoplasm, providing the force for cell motility. Seems to contact the mother actin filament. In addition to its role in the cytoplasmic cytoskeleton, the Arp2/3 complex also promotes actin polymerization in the nucleus, thereby regulating gene transcription and repair of damaged DNA. The Arp2/3 complex promotes homologous recombination (HR) repair in response to DNA damage by promoting nuclear actin polymerization, leading to drive motility of double-strand breaks (DSBs). This is Actin-related protein 2/3 complex subunit 2 (ARPC2) from Homo sapiens (Human).